The sequence spans 201 residues: dCTP deaminase, dUMP-forming (201 aa).

Residues 101–106, D119, 127–129, Q148, Y162, and Q174 each bind dCTP; these read KSSLGR and TLE. Residue E129 is the Proton donor/acceptor of the active site.

It belongs to the dCTP deaminase family. In terms of assembly, homotrimer.

The enzyme catalyses dCTP + 2 H2O = dUMP + NH4(+) + diphosphate. The protein operates within pyrimidine metabolism; dUMP biosynthesis; dUMP from dCTP: step 1/1. Bifunctional enzyme that catalyzes both the deamination of dCTP to dUTP and the hydrolysis of dUTP to dUMP without releasing the toxic dUTP intermediate. This is dCTP deaminase, dUMP-forming from Clavibacter michiganensis subsp. michiganensis (strain NCPPB 382).